We begin with the raw amino-acid sequence, 524 residues long: Phosphoenolpyruvate carboxykinase (ATP) (524 aa).

Substrate is bound by residues Arg52, Tyr188, and Lys194. Residues Lys194, His213, and 229–237 contribute to the ATP site; that span reads GLSGTGKTT. The Mn(2+) site is built by Lys194 and His213. Asp250 contributes to the Mn(2+) binding site. Positions 278, 314, and 439 each coordinate ATP. Arg314 serves as a coordination point for substrate.

This sequence belongs to the phosphoenolpyruvate carboxykinase (ATP) family. Mn(2+) serves as cofactor.

It localises to the cytoplasm. It catalyses the reaction oxaloacetate + ATP = phosphoenolpyruvate + ADP + CO2. It functions in the pathway carbohydrate biosynthesis; gluconeogenesis. Functionally, involved in the gluconeogenesis. Catalyzes the conversion of oxaloacetate (OAA) to phosphoenolpyruvate (PEP) through direct phosphoryl transfer between the nucleoside triphosphate and OAA. The polypeptide is Phosphoenolpyruvate carboxykinase (ATP) (Campylobacter jejuni (strain RM1221)).